Reading from the N-terminus, the 447-residue chain is N-succinylarginine dihydrolase (447 aa).

Residues 19–28 (AGLSFGNEAS), Asn-110, and 137–138 (HR) each bind substrate. Glu-174 is an active-site residue. Substrate is bound at residue Arg-212. His-248 is an active-site residue. Substrate is bound by residues Asp-250 and Asn-359. Cys-365 functions as the Nucleophile in the catalytic mechanism.

This sequence belongs to the succinylarginine dihydrolase family. Homodimer.

The catalysed reaction is N(2)-succinyl-L-arginine + 2 H2O + 2 H(+) = N(2)-succinyl-L-ornithine + 2 NH4(+) + CO2. The protein operates within amino-acid degradation; L-arginine degradation via AST pathway; L-glutamate and succinate from L-arginine: step 2/5. Its function is as follows. Catalyzes the hydrolysis of N(2)-succinylarginine into N(2)-succinylornithine, ammonia and CO(2). The protein is N-succinylarginine dihydrolase of Salmonella gallinarum (strain 287/91 / NCTC 13346).